The following is a 395-amino-acid chain: Scyllo-inosose 3-dehydrogenase (395 aa).

Cys-66 is a binding site for Zn(2+). Active-site charge relay system residues include Ser-68 and His-71. Zn(2+)-binding residues include His-95, Glu-96, Cys-131, Cys-134, Cys-137, Cys-145, and Glu-193. NAD(+) is bound by residues Ile-223, Glu-243, and Arg-248.

The protein belongs to the zinc-containing alcohol dehydrogenase family. In terms of assembly, homodimer. It depends on Zn(2+) as a cofactor.

The enzyme catalyses scyllo-inosose + NAD(+) = 3-dehydro-scyllo-inosose + NADH + H(+). Its pathway is polyol metabolism; myo-inositol metabolism. Catalyzes the NAD(+)-dependent oxidation of scyllo-inosose (2-keto-myo-inositol) to 3-dehydro-scyllo-inosose (diketo-inositol), and thus probably functions in a myo-inositol degradation pathway together with IolG, IolN and IolO. Has no activity on myo-inositol, D-chiro-inositol and 1-keto-D-chiro-inositol. This chain is Scyllo-inosose 3-dehydrogenase, found in Thermotoga maritima (strain ATCC 43589 / DSM 3109 / JCM 10099 / NBRC 100826 / MSB8).